Here is a 348-residue protein sequence, read N- to C-terminus: Large ribosomal subunit protein uL3m (348 aa).

Residues 1–40 (MPGWRLLAQAGARVLGCGARGLGADPGLERRKNILFFVRN) constitute a mitochondrion transit peptide.

Belongs to the universal ribosomal protein uL3 family. In terms of assembly, component of the mitochondrial ribosome large subunit (39S) which comprises a 16S rRNA and about 50 distinct proteins.

It localises to the mitochondrion. This chain is Large ribosomal subunit protein uL3m (Mrpl3), found in Mus musculus (Mouse).